The primary structure comprises 190 residues: Potassium-transporting ATPase KdpC subunit (190 aa).

Residues 10–30 form a helical membrane-spanning segment; the sequence is LLVFLTILTGGVYPLATTVLG.

The protein belongs to the KdpC family. The system is composed of three essential subunits: KdpA, KdpB and KdpC.

The protein localises to the cell inner membrane. In terms of biological role, part of the high-affinity ATP-driven potassium transport (or Kdp) system, which catalyzes the hydrolysis of ATP coupled with the electrogenic transport of potassium into the cytoplasm. This subunit acts as a catalytic chaperone that increases the ATP-binding affinity of the ATP-hydrolyzing subunit KdpB by the formation of a transient KdpB/KdpC/ATP ternary complex. The sequence is that of Potassium-transporting ATPase KdpC subunit from Cronobacter sakazakii (strain ATCC BAA-894) (Enterobacter sakazakii).